Consider the following 143-residue polypeptide: FAD synthase (143 aa).

ATP contacts are provided by residues 10 to 11 (TF), 15 to 18 (HPGH), and aspartate 93.

Belongs to the archaeal FAD synthase family. Homodimer. A divalent metal cation is required as a cofactor.

The enzyme catalyses FMN + ATP + H(+) = FAD + diphosphate. It functions in the pathway cofactor biosynthesis; FAD biosynthesis; FAD from FMN: step 1/1. Catalyzes the transfer of the AMP portion of ATP to flavin mononucleotide (FMN) to produce flavin adenine dinucleotide (FAD) coenzyme. In Haloterrigena turkmenica (strain ATCC 51198 / DSM 5511 / JCM 9101 / NCIMB 13204 / VKM B-1734 / 4k) (Halococcus turkmenicus), this protein is FAD synthase.